The following is a 256-amino-acid chain: 4-hydroxy-tetrahydrodipicolinate reductase (256 aa).

Residue 8-13 (GASGKM) coordinates NAD(+). Residue Lys-36 participates in NADP(+) binding. NAD(+) is bound by residues 87 to 89 (GTT) and 111 to 114 (ATNM). His-143 serves as the catalytic Proton donor/acceptor. His-144 is a binding site for (S)-2,3,4,5-tetrahydrodipicolinate. The Proton donor role is filled by Lys-147. A (S)-2,3,4,5-tetrahydrodipicolinate-binding site is contributed by 153 to 154 (GT).

This sequence belongs to the DapB family.

It is found in the cytoplasm. The enzyme catalyses (S)-2,3,4,5-tetrahydrodipicolinate + NAD(+) + H2O = (2S,4S)-4-hydroxy-2,3,4,5-tetrahydrodipicolinate + NADH + H(+). The catalysed reaction is (S)-2,3,4,5-tetrahydrodipicolinate + NADP(+) + H2O = (2S,4S)-4-hydroxy-2,3,4,5-tetrahydrodipicolinate + NADPH + H(+). The protein operates within amino-acid biosynthesis; L-lysine biosynthesis via DAP pathway; (S)-tetrahydrodipicolinate from L-aspartate: step 4/4. In terms of biological role, catalyzes the conversion of 4-hydroxy-tetrahydrodipicolinate (HTPA) to tetrahydrodipicolinate. In Campylobacter concisus (strain 13826), this protein is 4-hydroxy-tetrahydrodipicolinate reductase.